The sequence spans 448 residues: Cytoplasmic tRNA 2-thiolation protein 2 (448 aa).

The protein belongs to the CTU2/NCS2 family.

The protein resides in the cytoplasm. It participates in tRNA modification; 5-methoxycarbonylmethyl-2-thiouridine-tRNA biosynthesis. Plays a central role in 2-thiolation of mcm(5)S(2)U at tRNA wobble positions of tRNA(Lys), tRNA(Glu) and tRNA(Gln). May act by forming a heterodimer with NCS6 that ligates sulfur from thiocarboxylated URM1 onto the uridine of tRNAs at wobble position. Prior mcm(5) tRNA modification by the elongator complex is required for 2-thiolation. May also be involved in protein urmylation. The sequence is that of Cytoplasmic tRNA 2-thiolation protein 2 from Debaryomyces hansenii (strain ATCC 36239 / CBS 767 / BCRC 21394 / JCM 1990 / NBRC 0083 / IGC 2968) (Yeast).